The sequence spans 233 residues: Protein Mis18-alpha (233 aa).

3 positions are modified to phosphoserine: Ser36, Ser39, and Ser40. In terms of domain architecture, Mis18 spans 80–178; that stretch reads PLVFLCSGCR…SVEAIESYVL (99 aa). Residues Cys85, Cys88, Cys141, and Cys144 each coordinate Zn(2+). Lys162 participates in a covalent cross-link: Glycyl lysine isopeptide (Lys-Gly) (interchain with G-Cter in SUMO2). At Ser233 the chain carries Phosphoserine.

Belongs to the mis18 family. As to quaternary structure, homodimer, and heterodimer with OIP5/MIS18B. Identified in a complex containing MIS18A, OIP5/MIS18B, MIS18BP1, RBBP7 and RBBP4. As to expression, detected in testis.

It localises to the nucleus. Its subcellular location is the chromosome. The protein localises to the centromere. In terms of biological role, required for recruitment of CENPA to centromeres and normal chromosome segregation during mitosis. This is Protein Mis18-alpha (MIS18A) from Homo sapiens (Human).